The chain runs to 504 residues: Cytochrome P450 2D10 (504 aa).

O-linked (GlcNAc) serine glycosylation occurs at serine 382. Cysteine 446 is a heme binding site.

Belongs to the cytochrome P450 family. It depends on heme as a cofactor.

It is found in the endoplasmic reticulum membrane. It localises to the microsome membrane. The enzyme catalyses an organic molecule + reduced [NADPH--hemoprotein reductase] + O2 = an alcohol + oxidized [NADPH--hemoprotein reductase] + H2O + H(+). Its function is as follows. Cytochromes P450 are a group of heme-thiolate monooxygenases. In liver microsomes, this enzyme is involved in an NADPH-dependent electron transport pathway. It oxidizes a variety of structurally unrelated compounds, including steroids, fatty acids, and xenobiotics. This chain is Cytochrome P450 2D10 (Cyp2d10), found in Rattus norvegicus (Rat).